A 91-amino-acid chain; its full sequence is DNA-directed RNA polymerase subunit Rpo5 (91 aa).

This sequence belongs to the archaeal Rpo5/eukaryotic RPB5 RNA polymerase subunit family. In terms of assembly, part of the RNA polymerase complex.

It is found in the cytoplasm. It catalyses the reaction RNA(n) + a ribonucleoside 5'-triphosphate = RNA(n+1) + diphosphate. DNA-dependent RNA polymerase (RNAP) catalyzes the transcription of DNA into RNA using the four ribonucleoside triphosphates as substrates. In Staphylothermus marinus (strain ATCC 43588 / DSM 3639 / JCM 9404 / F1), this protein is DNA-directed RNA polymerase subunit Rpo5.